A 414-amino-acid polypeptide reads, in one-letter code: 2,3-diketo-5-methylthiopentyl-1-phosphate enolase (414 aa).

Residue Lys99 is the Proton acceptor of the active site. Substrate-binding positions include Lys148, 174–177, His265, Gly338, and 360–361; these read KDDE and GG. Residues Lys174, Asp176, and Glu177 each coordinate Mg(2+). At Lys174 the chain carries N6-carboxylysine.

This sequence belongs to the RuBisCO large chain family. Type IV subfamily. In terms of assembly, homodimer. The cofactor is Mg(2+).

The enzyme catalyses 5-methylsulfanyl-2,3-dioxopentyl phosphate = 2-hydroxy-5-methylsulfanyl-3-oxopent-1-enyl phosphate. The protein operates within amino-acid biosynthesis; L-methionine biosynthesis via salvage pathway; L-methionine from S-methyl-5-thio-alpha-D-ribose 1-phosphate: step 3/6. Its function is as follows. Catalyzes the enolization of 2,3-diketo-5-methylthiopentyl-1-phosphate (DK-MTP-1-P) into 2-hydroxy-3-keto-5-methylthiopentenyl-1-phosphate (HK-MTPenyl-1-P). The sequence is that of 2,3-diketo-5-methylthiopentyl-1-phosphate enolase from Bacillus cereus (strain G9842).